A 74-amino-acid chain; its full sequence is MTTDIKQLELKISDLECQMAFQEQTIDELNDALSQQQLLITNMQVQMKFVVGKMKTMDTSSMADASEETPPPHY.

This sequence belongs to the SlyX family.

This is Protein SlyX homolog from Aliivibrio salmonicida (strain LFI1238) (Vibrio salmonicida (strain LFI1238)).